The chain runs to 263 residues: Acyl-[acyl-carrier-protein]--UDP-N-acetylglucosamine O-acyltransferase (263 aa).

Belongs to the transferase hexapeptide repeat family. LpxA subfamily. As to quaternary structure, homotrimer.

The protein resides in the cytoplasm. It catalyses the reaction a (3R)-hydroxyacyl-[ACP] + UDP-N-acetyl-alpha-D-glucosamine = a UDP-3-O-[(3R)-3-hydroxyacyl]-N-acetyl-alpha-D-glucosamine + holo-[ACP]. It participates in glycolipid biosynthesis; lipid IV(A) biosynthesis; lipid IV(A) from (3R)-3-hydroxytetradecanoyl-[acyl-carrier-protein] and UDP-N-acetyl-alpha-D-glucosamine: step 1/6. Its function is as follows. Involved in the biosynthesis of lipid A, a phosphorylated glycolipid that anchors the lipopolysaccharide to the outer membrane of the cell. This is Acyl-[acyl-carrier-protein]--UDP-N-acetylglucosamine O-acyltransferase from Campylobacter jejuni subsp. doylei (strain ATCC BAA-1458 / RM4099 / 269.97).